We begin with the raw amino-acid sequence, 437 residues long: F-box protein At3g62430 (437 aa).

One can recognise an F-box domain in the interval 1 to 49 (MDRISNLPDGVIYRVISLLSTKEATCLKYTSKNWLNLVTIIPIAVFVDS).

The polypeptide is F-box protein At3g62430 (Arabidopsis thaliana (Mouse-ear cress)).